Reading from the N-terminus, the 589-residue chain is Bifunctional protein TrpGD (589 aa).

In terms of domain architecture, Glutamine amidotransferase type-1 spans 46 to 241 (RVIVIDNYDS…LNIQDIQVKK (196 aa)). 99 to 101 (GPG) is a binding site for L-glutamine. Catalysis depends on C126, which acts as the Nucleophile; for GATase activity. L-glutamine is bound by residues Q130 and 176 to 177 (SL). Active-site for GATase activity residues include H215 and E217. Residues 253–589 (ALKKLVEFED…MDYQKTLGNS (337 aa)) form an anthranilate phosphoribosyltransferase region.

In the C-terminal section; belongs to the anthranilate phosphoribosyltransferase family. As to quaternary structure, heterotetramer consisting of two non-identical subunits: a beta subunit (TrpG) and a large alpha subunit (TrpE).

It catalyses the reaction chorismate + L-glutamine = anthranilate + pyruvate + L-glutamate + H(+). The enzyme catalyses N-(5-phospho-beta-D-ribosyl)anthranilate + diphosphate = 5-phospho-alpha-D-ribose 1-diphosphate + anthranilate. The protein operates within amino-acid biosynthesis; L-tryptophan biosynthesis; L-tryptophan from chorismate: step 1/5. Its pathway is amino-acid biosynthesis; L-tryptophan biosynthesis; L-tryptophan from chorismate: step 2/5. Functionally, part of a heterotetrameric complex that catalyzes the two-step biosynthesis of anthranilate, an intermediate in the biosynthesis of L-tryptophan. In the first step, the glutamine-binding beta subunit (TrpG) of anthranilate synthase (AS) provides the glutamine amidotransferase activity which generates ammonia as a substrate that, along with chorismate, is used in the second step, catalyzed by the large alpha subunit of AS (TrpE) to produce anthranilate. In the absence of TrpG, TrpE can synthesize anthranilate directly from chorismate and high concentrations of ammonia. In addition to synthesizing anthranilate, it also catalyzes the second step of the pathway, the transfer of the phosphoribosyl group of 5-phosphorylribose-1-pyrophosphate (PRPP) to anthranilate. The polypeptide is Bifunctional protein TrpGD (trpGD) (Thermotoga maritima (strain ATCC 43589 / DSM 3109 / JCM 10099 / NBRC 100826 / MSB8)).